Here is a 208-residue protein sequence, read N- to C-terminus: Pyridoxine/pyridoxamine 5'-phosphate oxidase (208 aa).

FMN is bound by residues 55-60 (RMVLLK), 70-71 (YT), Lys-76, Lys-77, and Gln-99. Residue Lys-60 coordinates substrate. The substrate site is built by Tyr-117, Arg-121, and Ser-125. FMN-binding positions include 134–135 (QS) and Trp-179. Residue 185–187 (RLH) participates in substrate binding. Residue Arg-189 coordinates FMN.

The protein belongs to the pyridoxamine 5'-phosphate oxidase family. In terms of assembly, homodimer. Requires FMN as cofactor.

The enzyme catalyses pyridoxamine 5'-phosphate + O2 + H2O = pyridoxal 5'-phosphate + H2O2 + NH4(+). It catalyses the reaction pyridoxine 5'-phosphate + O2 = pyridoxal 5'-phosphate + H2O2. Its pathway is cofactor metabolism; pyridoxal 5'-phosphate salvage; pyridoxal 5'-phosphate from pyridoxamine 5'-phosphate: step 1/1. It participates in cofactor metabolism; pyridoxal 5'-phosphate salvage; pyridoxal 5'-phosphate from pyridoxine 5'-phosphate: step 1/1. Functionally, catalyzes the oxidation of either pyridoxine 5'-phosphate (PNP) or pyridoxamine 5'-phosphate (PMP) into pyridoxal 5'-phosphate (PLP). In Brucella abortus biovar 1 (strain 9-941), this protein is Pyridoxine/pyridoxamine 5'-phosphate oxidase.